The chain runs to 298 residues: Tyrosine recombinase XerC (298 aa).

The Core-binding (CB) domain occupies 1 to 84; that stretch reads MNHIQEAFLN…TLRTLYEYWM (84 aa). The Tyr recombinase domain occupies 105-286; sequence YLPQFSLEEE…SNQQLRKVYL (182 aa). Catalysis depends on residues arginine 145, lysine 169, histidine 238, arginine 241, and histidine 264. Catalysis depends on tyrosine 273, which acts as the O-(3'-phospho-DNA)-tyrosine intermediate.

This sequence belongs to the 'phage' integrase family. XerC subfamily. In terms of assembly, forms a cyclic heterotetrameric complex composed of two molecules of XerC and two molecules of XerD.

The protein resides in the cytoplasm. Site-specific tyrosine recombinase, which acts by catalyzing the cutting and rejoining of the recombining DNA molecules. The XerC-XerD complex is essential to convert dimers of the bacterial chromosome into monomers to permit their segregation at cell division. It also contributes to the segregational stability of plasmids. This Staphylococcus aureus protein is Tyrosine recombinase XerC.